A 598-amino-acid chain; its full sequence is Arginine--tRNA ligase (598 aa).

The short motif at A131–H141 is the 'HIGH' region element. The interval K288–G309 is disordered.

The protein belongs to the class-I aminoacyl-tRNA synthetase family. As to quaternary structure, monomer.

It localises to the cytoplasm. It catalyses the reaction tRNA(Arg) + L-arginine + ATP = L-arginyl-tRNA(Arg) + AMP + diphosphate. The polypeptide is Arginine--tRNA ligase (Anaeromyxobacter dehalogenans (strain 2CP-1 / ATCC BAA-258)).